We begin with the raw amino-acid sequence, 232 residues long: Ribonuclease 3 (232 aa).

One can recognise an RNase III domain in the interval 6–133 (FNDIENRLGV…VIAAVYLDKG (128 aa)). A Mg(2+)-binding site is contributed by Glu-46. The active site involves Asp-50. Residues Asp-119 and Glu-122 each coordinate Mg(2+). Glu-122 is an active-site residue. Residues 160-229 (DFKTKLQELL…AKEALKRLEK (70 aa)) enclose the DRBM domain.

The protein belongs to the ribonuclease III family. Homodimer. It depends on Mg(2+) as a cofactor.

It is found in the cytoplasm. It catalyses the reaction Endonucleolytic cleavage to 5'-phosphomonoester.. Its function is as follows. Digests double-stranded RNA. Involved in the processing of primary rRNA transcript to yield the immediate precursors to the large and small rRNAs (23S and 16S). Processes some mRNAs, and tRNAs when they are encoded in the rRNA operon. Processes pre-crRNA and tracrRNA of type II CRISPR loci if present in the organism. This is Ribonuclease 3 from Clostridium botulinum (strain Alaska E43 / Type E3).